Reading from the N-terminus, the 209-residue chain is Orotate phosphoribosyltransferase (209 aa).

5-phospho-alpha-D-ribose 1-diphosphate-binding positions include arginine 96, lysine 100, histidine 102, and 122-130 (EDLISTGGS). Serine 126 is a binding site for orotate.

The protein belongs to the purine/pyrimidine phosphoribosyltransferase family. PyrE subfamily. Homodimer. Requires Mg(2+) as cofactor.

It catalyses the reaction orotidine 5'-phosphate + diphosphate = orotate + 5-phospho-alpha-D-ribose 1-diphosphate. Its pathway is pyrimidine metabolism; UMP biosynthesis via de novo pathway; UMP from orotate: step 1/2. Catalyzes the transfer of a ribosyl phosphate group from 5-phosphoribose 1-diphosphate to orotate, leading to the formation of orotidine monophosphate (OMP). This chain is Orotate phosphoribosyltransferase, found in Streptococcus thermophilus (strain ATCC BAA-491 / LMD-9).